The chain runs to 233 residues: Ribosome-recycling factor, mitochondrial (233 aa).

It belongs to the RRF family.

It is found in the mitochondrion. Functionally, necessary for protein synthesis in mitochondria. Functions as a ribosome recycling factor in mitochondria. This chain is Ribosome-recycling factor, mitochondrial (RRF1), found in Candida glabrata (strain ATCC 2001 / BCRC 20586 / JCM 3761 / NBRC 0622 / NRRL Y-65 / CBS 138) (Yeast).